We begin with the raw amino-acid sequence, 132 residues long: Long-chain acyl-CoA thioesterase FadM (132 aa).

Aspartate 13 is an active-site residue.

It belongs to the 4-hydroxybenzoyl-CoA thioesterase family. As to quaternary structure, homotetramer.

It catalyses the reaction (3E,5Z)-tetradecadienoyl-CoA + H2O = (3E,5Z)-tetradecadienoate + CoA + H(+). It carries out the reaction (3E,5Z)-dodecadienoyl-CoA + H2O = (3E,5Z)-dodecadienoate + CoA + H(+). The catalysed reaction is (9Z)-octadecenoyl-CoA + H2O = (9Z)-octadecenoate + CoA + H(+). The enzyme catalyses octadecanoyl-CoA + H2O = octadecanoate + CoA + H(+). It catalyses the reaction hexadecanoyl-CoA + H2O = hexadecanoate + CoA + H(+). It carries out the reaction (3S)-hydroxytetradecanoyl-CoA + H2O = (3S)-hydroxytetradecanoate + CoA + H(+). The catalysed reaction is tetradecanoyl-CoA + H2O = tetradecanoate + CoA + H(+). In terms of biological role, long-chain acyl-CoA thioesterase that could be involved in beta-oxidation of fatty acids. Is most active with 3,5-tetradecadienoyl-CoA, a metabolite of oleic acid that is hydrolyzed during oleate beta-oxidation, but can also use other substrates such as 3,5-dodecadienoyl-CoA, 9-cis-octadecenoyl-CoA, octadecanoyl-CoA, hexadecanoyl-CoA, 3-hydroxytetradecanoyl-CoA and tetradecanoyl-CoA. In Escherichia coli (strain K12), this protein is Long-chain acyl-CoA thioesterase FadM.